The primary structure comprises 1060 residues: Protocadherin-1 (1060 aa).

The N-terminal stretch at 1–57 (MDSGAGGRRCPEAALLILGPPRMEHLRHSPGPGGQRLLLPSMLLALLLLLAPSPGHA) is a signal peptide. Cadherin domains follow at residues 58 to 168 (TRVV…TPNF), 169 to 280 (ASPV…APKF), 281 to 387 (ERPS…APTI), 396 to 506 (THQD…APVF), 507 to 612 (TQSV…DPKF), 613 to 715 (MLSG…APYI), and 718 to 844 (PSNT…DPEY). Residues 58-852 (TRVVYKVPEE…EYERSKQRGN (795 aa)) are Extracellular-facing. Residues asparagine 305 and asparagine 403 are each glycosylated (N-linked (GlcNAc...) asparagine). 4 N-linked (GlcNAc...) asparagine glycosylation sites follow: asparagine 618, asparagine 662, asparagine 813, and asparagine 818. Residues 853–873 (ILFGVVAGVVAVALLIALAVL) traverse the membrane as a helical segment. The Cytoplasmic segment spans residues 874–1060 (VRYCRQREAK…HGAIWTEVWE (187 aa)). The segment covering 884 to 897 (SGYQAGKKETKDLY) has biased composition (basic and acidic residues). A disordered region spans residues 884 to 1045 (SGYQAGKKET…QPFQLSTPQP (162 aa)). Over residues 907–920 (KGNKSKGKKSKSPK) the composition is skewed to basic residues. Residues serine 918, serine 949, serine 962, and serine 984 each carry the phosphoserine modification. Residues 973–986 (SPLPSIQLQPQSPS) are compositionally biased toward low complexity. 2 stretches are compositionally biased toward polar residues: residues 1003–1024 (FVGT…SYRT) and 1033–1043 (QVGQPFQLSTP).

In terms of tissue distribution, highly expressed in the brain and neuro-glial cells.

It localises to the cell junction. It is found in the cell membrane. Functionally, may be involved in cell-cell interaction processes and in cell adhesion. The chain is Protocadherin-1 (PCDH1) from Homo sapiens (Human).